Here is a 424-residue protein sequence, read N- to C-terminus: Zinc metalloproteinase-disintegrin-like brevilysin H2b (424 aa).

A Pyrrolidone carboxylic acid modification is found at Gln1. The Peptidase M12B domain occupies 9 to 207; it reads RYVKLAIVAD…YKPQCILNEP (199 aa). An N-linked (GlcNAc...) asparagine glycan is attached at Asn69. A Ca(2+)-binding site is contributed by Asp96. 3 disulfide bridges follow: Cys120–Cys202, Cys164–Cys186, and Cys166–Cys169. Residue His145 coordinates Zn(2+). The active site involves Glu146. Zn(2+) is bound by residues His149 and His155. Asn185 carries an N-linked (GlcNAc...) asparagine glycan. Residues Cys202, Asn205, Val217, Asn220, Leu222, Glu224, Glu227, and Asp230 each contribute to the Ca(2+) site. One can recognise a Disintegrin domain in the interval 215–301; the sequence is PPVCGNELLE…DCPTDDLQRN (87 aa). Disulfide bonds link Cys218–Cys247, Cys229–Cys242, Cys231–Cys237, Cys241–Cys264, Cys255–Cys261, Cys260–Cys286, Cys273–Cys293, Cys280–Cys312, Cys305–Cys317, Cys324–Cys374, Cys339–Cys385, Cys352–Cys362, Cys369–Cys411, and Cys405–Cys417. The D/ECD-tripeptide signature appears at 279 to 281; it reads DCD. 3 residues coordinate Ca(2+): Asp281, Glu284, and Asp296.

It belongs to the venom metalloproteinase (M12B) family. P-III subfamily. P-IIIa sub-subfamily. In terms of assembly, monomer. Requires Zn(2+) as cofactor. Glycosylated. Expressed by the venom gland.

Its subcellular location is the secreted. Its proteolytic activity is inhibited by EDTA, TPEN, 1,10-phenanthroline, and some thiol compounds, but is enhanced by alkaline earth metal ions (Mg2+, Ca2+, Sr2+, and Ba2+). Its activity is not modulated by urea (4 M). Functionally, non-hemorrhagic metalloproteinase that degrades fibrinogen. The alpha chain (FGA) is rapidly degraded, the beta chain (FGB) is degraded very slowly, while the gamma chain is left intact. Shows a prefential cleavage at X-Leu bonds. Cleaves insulin B chain at '29-His-|-Leu-30', '33-Ser-|-His-34', '38-Ala-|-Leu-39' and '40-Tyr-|-Leu-41' bonds. This Gloydius brevicauda (Korean slamosa snake) protein is Zinc metalloproteinase-disintegrin-like brevilysin H2b.